Consider the following 128-residue polypeptide: Protein C10 (128 aa).

This sequence belongs to the UPF0456 family.

Its subcellular location is the cytoplasm. The polypeptide is Protein C10 (Xenopus laevis (African clawed frog)).